The primary structure comprises 186 residues: Large ribosomal subunit protein uL5 (186 aa).

The protein belongs to the universal ribosomal protein uL5 family. In terms of assembly, part of the 50S ribosomal subunit; part of the 5S rRNA/L5/L18/L25 subcomplex. Contacts the 5S rRNA and the P site tRNA. Forms a bridge to the 30S subunit in the 70S ribosome.

In terms of biological role, this is one of the proteins that bind and probably mediate the attachment of the 5S RNA into the large ribosomal subunit, where it forms part of the central protuberance. In the 70S ribosome it contacts protein S13 of the 30S subunit (bridge B1b), connecting the 2 subunits; this bridge is implicated in subunit movement. Contacts the P site tRNA; the 5S rRNA and some of its associated proteins might help stabilize positioning of ribosome-bound tRNAs. This Jannaschia sp. (strain CCS1) protein is Large ribosomal subunit protein uL5.